The following is a 228-amino-acid chain: MFENLQKAILIRRYKRFLADIELHNGNVLTIYCPNTGAMTGCAEPGDQVWYSTSNNLKRKYKYTWELTFTKGGHWICVNTARANQLVKEALHNSEIEALSGYSQIKAEVKYGTENSRIDFLLSNENKADCYVEVKSCTLLEQPLAEGKGFFPDTVTTRGQKHLRELIEMKQQGHRSVLLFAVLHSGIKSVQAAGHLDVKYAQLFEQAKKAGVEVYCYYPELTLPCLEE.

Belongs to the SfsA family.

The protein is Sugar fermentation stimulation protein homolog of Psychromonas ingrahamii (strain DSM 17664 / CCUG 51855 / 37).